The chain runs to 200 residues: Putative vacuolar protein sorting-associated protein 24 homolog 2 (200 aa).

Residues 2 to 23 (TIKSLLSDIEREERNVHKAIKD) adopt a coiled-coil conformation.

Belongs to the SNF7 family. As to quaternary structure, component of the endosomal sorting required for transport complex III (ESCRT-III), composed at least of VPS2, VPS20, VPS24 and VPS32.

It localises to the endosome. In terms of biological role, component of the ESCRT-III complex, which is required for multivesicular bodies (MVBs) formation and sorting of endosomal cargo proteins into MVBs. The ESCRT-III complex is probably involved in the concentration of MVB cargo. This chain is Putative vacuolar protein sorting-associated protein 24 homolog 2 (VPS24-2), found in Arabidopsis thaliana (Mouse-ear cress).